A 388-amino-acid chain; its full sequence is Zinc finger C2H2 protein ECU10_0150 (388 aa).

The C2H2-type zinc-finger motif lies at Y299 to H322.

In Encephalitozoon cuniculi (strain GB-M1) (Microsporidian parasite), this protein is Zinc finger C2H2 protein ECU10_0150.